Consider the following 89-residue polypeptide: Large ribosomal subunit protein bL27 (89 aa).

The disordered stretch occupies residues 1–22 (MAHKKAGGSSRNGRDSESKRLG).

It belongs to the bacterial ribosomal protein bL27 family.

In Rhizobium etli (strain CIAT 652), this protein is Large ribosomal subunit protein bL27.